The primary structure comprises 28 residues: Omega-agatoxin-Aa2a (28 aa).

Belongs to the neurotoxin 04 (omega-agtx) family. 03 (type II/III omega-agtx) subfamily. Expressed by the venom gland.

It is found in the secreted. Its function is as follows. Omega-agatoxin are antagonist of voltage-gated calcium channels. They block insect neuromuscular transmission presynaptically. Potent blocker of N-type calcium channels (Cav2.2/CACNA1B). This is Omega-agatoxin-Aa2a from Agelenopsis aperta (North American funnel-web spider).